The following is a 404-amino-acid chain: MDKVKKAVLAFSGGLDTSVILKWLQDTYQCEVVTFTADIGQGEEIEPARAKALQFGIKEIFIEDLREEFVRDYVFPMFRANTVYEGEYLLGTSIARPLIAKRQVEIAQQTGADAVSHGATGKGNDQVRFELGYYALQPDIRVIAPWREWDLTSREKLLAYAEKQGIPIEMKKKQGSPYSMDANLLHISYEGRALEDPAVEAEESMWRWTISPEAAPNEPEYLDLEYERGDIVALNGEKLSPAAVLTKLNQLGGKHGIGRLDLVENRYVGMKSRGCYETPGGTIMLRAHRAIESITLDREVAHLKDDLMPRYAALIYNGYWWSPERKLLQVLIDESQAHVNGQVRVKLYKGNVMVVGRDSRTDSLFDPTIATFEEDGGAYHQADAAGFIKLNALRMRIAKALRRH.

ATP-binding positions include 10-18 (AFSGGLDTS) and Ala-37. The L-citrulline site is built by Tyr-88 and Ser-93. Gly-118 provides a ligand contact to ATP. 3 residues coordinate L-aspartate: Thr-120, Asn-124, and Asp-125. Asn-124 contacts L-citrulline. Residues Arg-128, Ser-179, Ser-188, Glu-264, and Tyr-276 each coordinate L-citrulline.

This sequence belongs to the argininosuccinate synthase family. Type 1 subfamily. As to quaternary structure, homotetramer.

The protein localises to the cytoplasm. The catalysed reaction is L-citrulline + L-aspartate + ATP = 2-(N(omega)-L-arginino)succinate + AMP + diphosphate + H(+). It participates in amino-acid biosynthesis; L-arginine biosynthesis; L-arginine from L-ornithine and carbamoyl phosphate: step 2/3. This chain is Argininosuccinate synthase, found in Nitrosomonas eutropha (strain DSM 101675 / C91 / Nm57).